A 396-amino-acid polypeptide reads, in one-letter code: MVEAAPRNFTINFGPQHPAAHGVLRLVLELDGEVVRRVDPHIGLLHRGTEKLIEHKTYLQALPYFDRLDYVAPMNQEHAFCLATEKLLNITIPKRGQLIRVLYCEIGRLLSHLLNVTTQAMDVGALTPPLWGFEEREKLMVFYERASGARMHANYFRVGGVHQDLPSKLLDDIWDFCDPFLKVCDDLEGLLTENRIFKQRNVGIAEVKLADAWGWGFSGVMVRGSGAAWDLRKAQPYECYSELDFDIPIGKHGDCYDRYLVRMEEMRQSVRIMKQCLEKLRLPEGQGPVATRDHKIVPPSRAEMKRSMEAMIEHFKLYTEGHRVPAGEVYVAVEAPKGEFGVYLVSDGTNQPYKCKIRAPSFAHLSAMDFLTRGHMLADVSAIIGSLDIVFGEIDR.

This sequence belongs to the complex I 49 kDa subunit family. NDH-1 is composed of 14 different subunits. Subunits NuoB, C, D, E, F, and G constitute the peripheral sector of the complex.

The protein resides in the cell inner membrane. The enzyme catalyses a quinone + NADH + 5 H(+)(in) = a quinol + NAD(+) + 4 H(+)(out). In terms of biological role, NDH-1 shuttles electrons from NADH, via FMN and iron-sulfur (Fe-S) centers, to quinones in the respiratory chain. The immediate electron acceptor for the enzyme in this species is believed to be ubiquinone. Couples the redox reaction to proton translocation (for every two electrons transferred, four hydrogen ions are translocated across the cytoplasmic membrane), and thus conserves the redox energy in a proton gradient. The polypeptide is NADH-quinone oxidoreductase subunit D 1 (Nitrobacter hamburgensis (strain DSM 10229 / NCIMB 13809 / X14)).